A 338-amino-acid chain; its full sequence is Lipoate-protein ligase A (338 aa).

The BPL/LPL catalytic domain occupies Pro-29–Val-216. Residues Arg-71, Gly-76–Phe-79, and Lys-134 each bind ATP. (R)-lipoate is bound at residue Lys-134.

It belongs to the LplA family. As to quaternary structure, monomer.

The protein resides in the cytoplasm. It catalyses the reaction L-lysyl-[lipoyl-carrier protein] + (R)-lipoate + ATP = N(6)-[(R)-lipoyl]-L-lysyl-[lipoyl-carrier protein] + AMP + diphosphate + H(+). Its pathway is protein modification; protein lipoylation via exogenous pathway; protein N(6)-(lipoyl)lysine from lipoate: step 1/2. It functions in the pathway protein modification; protein lipoylation via exogenous pathway; protein N(6)-(lipoyl)lysine from lipoate: step 2/2. Its function is as follows. Catalyzes both the ATP-dependent activation of exogenously supplied lipoate to lipoyl-AMP and the transfer of the activated lipoyl onto the lipoyl domains of lipoate-dependent enzymes. This Salmonella newport (strain SL254) protein is Lipoate-protein ligase A.